Reading from the N-terminus, the 563-residue chain is Secreted lipase ARB07186/07185 (563 aa).

The signal sequence occupies residues 1–20 (MAKYDFVMLWILTLTAAIAA). Cys-83 and Cys-101 form a disulfide bridge. Ser-215 (acyl-ester intermediate) is an active-site residue. An intrachain disulfide couples Cys-268 to Cys-281.

This sequence belongs to the type-B carboxylesterase/lipase family.

It is found in the secreted. The enzyme catalyses a triacylglycerol + H2O = a diacylglycerol + a fatty acid + H(+). The sequence is that of Secreted lipase ARB07186/07185 from Arthroderma benhamiae (strain ATCC MYA-4681 / CBS 112371) (Trichophyton mentagrophytes).